Reading from the N-terminus, the 444-residue chain is ATP-dependent protease ATPase subunit HslU (444 aa).

Residues I18, 60–65 (GVGKTE), D256, E322, and R394 contribute to the ATP site.

The protein belongs to the ClpX chaperone family. HslU subfamily. As to quaternary structure, a double ring-shaped homohexamer of HslV is capped on each side by a ring-shaped HslU homohexamer. The assembly of the HslU/HslV complex is dependent on binding of ATP.

It is found in the cytoplasm. In terms of biological role, ATPase subunit of a proteasome-like degradation complex; this subunit has chaperone activity. The binding of ATP and its subsequent hydrolysis by HslU are essential for unfolding of protein substrates subsequently hydrolyzed by HslV. HslU recognizes the N-terminal part of its protein substrates and unfolds these before they are guided to HslV for hydrolysis. This is ATP-dependent protease ATPase subunit HslU from Buchnera aphidicola subsp. Cinara cedri (strain Cc).